Here is a 138-residue protein sequence, read N- to C-terminus: Large ribosomal subunit protein uL16 (138 aa).

Residues 1–19 (MLIPKRVKYRRQHRPHRSG) show a composition bias toward basic residues. Residues 1 to 24 (MLIPKRVKYRRQHRPHRSGVSKGG) are disordered.

Belongs to the universal ribosomal protein uL16 family. Part of the 50S ribosomal subunit.

In terms of biological role, binds 23S rRNA and is also seen to make contacts with the A and possibly P site tRNAs. The sequence is that of Large ribosomal subunit protein uL16 from Corynebacterium jeikeium (strain K411).